Consider the following 342-residue polypeptide: Eukaryotic translation initiation factor 3 subunit F (342 aa).

The MPN domain maps to 30–166 (VAIQPQAVFS…SRTYISAPIG (137 aa)). Residues 310-342 (TDALAGDGQKDGGDRKQGGDRRNKGRQQRTQEA) form a disordered region. Residues 317 to 331 (GQKDGGDRKQGGDRR) show a composition bias toward basic and acidic residues.

The protein belongs to the eIF-3 subunit F family. As to quaternary structure, component of the eukaryotic translation initiation factor 3 (eIF-3) complex.

Its subcellular location is the cytoplasm. Functionally, component of the eukaryotic translation initiation factor 3 (eIF-3) complex, which is involved in protein synthesis of a specialized repertoire of mRNAs and, together with other initiation factors, stimulates binding of mRNA and methionyl-tRNAi to the 40S ribosome. The eIF-3 complex specifically targets and initiates translation of a subset of mRNAs involved in cell proliferation. In Phaeosphaeria nodorum (strain SN15 / ATCC MYA-4574 / FGSC 10173) (Glume blotch fungus), this protein is Eukaryotic translation initiation factor 3 subunit F.